The primary structure comprises 300 residues: ATP-dependent (S)-NAD(P)H-hydrate dehydratase (300 aa).

The YjeF C-terminal domain maps to 14–293; it reads LLTLFKTIVP…NEISAVFRSD (280 aa). Residues G114 and 167-173 each bind (6S)-NADPHX; that span reads NAMEFRR. ATP is bound by residues 198–202 and 219–228; these read KGVND and GSGRRCGGQG. D229 lines the (6S)-NADPHX pocket.

It belongs to the NnrD/CARKD family. The cofactor is Mg(2+).

It carries out the reaction (6S)-NADHX + ATP = ADP + phosphate + NADH + H(+). It catalyses the reaction (6S)-NADPHX + ATP = ADP + phosphate + NADPH + H(+). Catalyzes the dehydration of the S-form of NAD(P)HX at the expense of ATP, which is converted to ADP. Together with NAD(P)HX epimerase, which catalyzes the epimerization of the S- and R-forms, the enzyme allows the repair of both epimers of NAD(P)HX, a damaged form of NAD(P)H that is a result of enzymatic or heat-dependent hydration. This Drosophila pseudoobscura pseudoobscura (Fruit fly) protein is ATP-dependent (S)-NAD(P)H-hydrate dehydratase.